Consider the following 448-residue polypeptide: Cysteine--tRNA ligase (448 aa).

Position 27 (cysteine 27) interacts with Zn(2+). The 'HIGH' region motif lies at 29-39 (PTVYNYIHVGN). 3 residues coordinate Zn(2+): cysteine 210, histidine 235, and glutamate 239. Residues 267-271 (KMSKS) carry the 'KMSKS' region motif. Lysine 270 provides a ligand contact to ATP.

This sequence belongs to the class-I aminoacyl-tRNA synthetase family. As to quaternary structure, monomer. The cofactor is Zn(2+).

The protein resides in the cytoplasm. The enzyme catalyses tRNA(Cys) + L-cysteine + ATP = L-cysteinyl-tRNA(Cys) + AMP + diphosphate. This chain is Cysteine--tRNA ligase, found in Lactococcus lactis subsp. cremoris (strain SK11).